Reading from the N-terminus, the 89-residue chain is Small ribosomal subunit protein bS20 (89 aa).

Belongs to the bacterial ribosomal protein bS20 family.

Binds directly to 16S ribosomal RNA. This chain is Small ribosomal subunit protein bS20, found in Wolbachia sp. subsp. Drosophila simulans (strain wRi).